The following is an 834-amino-acid chain: Membrane-associated lipoprotein (834 aa).

The first 25 residues, 1–25 (MKKNKLTTLALILPITILTPIVIAS), serve as a signal peptide directing secretion. Cysteine 26 is lipidated: N-palmitoyl cysteine. Residue cysteine 26 is the site of S-diacylglycerol cysteine attachment. Residues 143–237 (RLKDTFDFKL…LLEVSGFKSN (95 aa)) form the Lipoprotein-associated type-17 domain.

The protein localises to the cell membrane. The chain is Membrane-associated lipoprotein from Ureaplasma parvum serovar 3 (strain ATCC 700970).